The primary structure comprises 344 residues: MKDLGAKHLAGGEGVQLFGLLNFYLEQEQRYQPREKGLILMEATPENDNTLCSRLRNAKVEDLRSLTNFFGSGTETFVLAVNILDRFLALMKVKPKHLSCIGVCCFLLAARLAEEEGDVPPTHDVIRISQCKCTASDIKRMEKIISEKLHYELEATTALNFLHLYHAIVFCHTSERKEILSLDKLEAQLKACNCRVVFSKARPSVLALCLLNLEIETIKSVELLEILLLVKKHLKLSDTEFFYWRELVSKCLAEYSSPRCCKPDLKKLVWIVSRRTAQNLHSSYYSVPELPTIPEGGCFDGSESEDSGEDMSCGEESLSSSPPSDQECTFFFDFQVAQTLCFPP.

The segment at 298-324 (CFDGSESEDSGEDMSCGEESLSSSPPS) is disordered. Acidic residues predominate over residues 302-313 (SESEDSGEDMSC).

It belongs to the cyclin family. Cyclin G subfamily. In terms of tissue distribution, highest levels in intestine. Intermediate levels in spleen, brain and kidney. Low levels in testis, stomach, pancreas, liver, salivary gland and muscle. According to PubMed:9139721 also abundant in thymus.

Its subcellular location is the cytoplasm. It is found in the nucleus. Functionally, may play a role in growth regulation and in negative regulation of cell cycle progression. The chain is Cyclin-G2 (Ccng2) from Mus musculus (Mouse).